The following is a 423-amino-acid chain: Gamma-glutamyl phosphate reductase (423 aa).

This sequence belongs to the gamma-glutamyl phosphate reductase family.

It is found in the cytoplasm. The enzyme catalyses L-glutamate 5-semialdehyde + phosphate + NADP(+) = L-glutamyl 5-phosphate + NADPH + H(+). Its pathway is amino-acid biosynthesis; L-proline biosynthesis; L-glutamate 5-semialdehyde from L-glutamate: step 2/2. Its function is as follows. Catalyzes the NADPH-dependent reduction of L-glutamate 5-phosphate into L-glutamate 5-semialdehyde and phosphate. The product spontaneously undergoes cyclization to form 1-pyrroline-5-carboxylate. This is Gamma-glutamyl phosphate reductase from Burkholderia orbicola (strain MC0-3).